Reading from the N-terminus, the 341-residue chain is MKALAKLKAAPGLEMTDVPLPEVGHNDLLIKIVKTAICGTDIHIWNWDEWSQKTIPVPMHVGHEYVGVVAGMGSEVQGFKIGQRVSGEGHITCGYCRNCRAGRRHLCRNTTGVGVNREGAFAEYLVIPAFNAFPIPDDISDDLASIFDPFGNAVHTALSFNLVGEDVLITGAGPIGIMAVAIAKHVGARHVVITDVNDYRLELAKKMGATRAVNVAREDLKAVMQELHMSEGFDVGLEMSGNPQAFRQMLETMNHGGKVALLGIPPSNTAIDWNQVIFKGLEIKGIYGREMFETWYKMVALIQSGLDISPIITHHFKVDEFEQGFAAMLSGQSGKVILDWR.

Residue cysteine 38 coordinates Zn(2+). Active-site charge relay system residues include threonine 40 and histidine 43. The Zn(2+) site is built by histidine 63, glutamate 64, cysteine 93, cysteine 96, cysteine 99, and cysteine 107. Residues isoleucine 175, aspartate 195, arginine 200, 262-264, and 286-287 contribute to the NAD(+) site; these read LGI and IY.

The protein belongs to the zinc-containing alcohol dehydrogenase family. In terms of assembly, homotetramer. Requires Zn(2+) as cofactor.

It localises to the cytoplasm. It catalyses the reaction L-threonine + NAD(+) = (2S)-2-amino-3-oxobutanoate + NADH + H(+). The protein operates within amino-acid degradation; L-threonine degradation via oxydo-reductase pathway; glycine from L-threonine: step 1/2. In terms of biological role, catalyzes the NAD(+)-dependent oxidation of L-threonine to 2-amino-3-ketobutyrate. The polypeptide is L-threonine 3-dehydrogenase (Chromobacterium violaceum (strain ATCC 12472 / DSM 30191 / JCM 1249 / CCUG 213 / NBRC 12614 / NCIMB 9131 / NCTC 9757 / MK)).